A 382-amino-acid chain; its full sequence is Alkanesulfonate monooxygenase (382 aa).

This sequence belongs to the SsuD family. In terms of assembly, homotetramer.

It catalyses the reaction an alkanesulfonate + FMNH2 + O2 = an aldehyde + FMN + sulfite + H2O + 2 H(+). Catalyzes the desulfonation of aliphatic sulfonates. The chain is Alkanesulfonate monooxygenase from Buttiauxella sp. (strain PNBS).